Reading from the N-terminus, the 130-residue chain is MSLMDPLANALNHVSNCESVGKNVAYLKPASKLIGRVLNVMQDQGYIGNFEYIEDGKAGVYKVDLIGQINKCGAVKPRFAVKNHDFEKFEKRYLPAKGFGLLIVSTPKGLMTHDEARSAGVGGRLISYIY.

The protein belongs to the universal ribosomal protein uS8 family. Part of the 30S ribosomal subunit.

In terms of biological role, one of the primary rRNA binding proteins, it binds directly to 16S rRNA central domain where it helps coordinate assembly of the platform of the 30S subunit. This is Small ribosomal subunit protein uS8 from Methanococcus maripaludis (strain C6 / ATCC BAA-1332).